We begin with the raw amino-acid sequence, 479 residues long: Poly(A) polymerase catalytic subunit (479 aa).

Catalysis depends on residues Asp-202 and Asp-204. 3 residues coordinate Ca(2+): Asp-202, Asp-204, and Asp-253.

This sequence belongs to the poxviridae poly(A) polymerase catalytic subunit family. As to quaternary structure, heterodimer of a large (catalytic) subunit and a small (regulatory) subunit.

It carries out the reaction RNA(n) + ATP = RNA(n)-3'-adenine ribonucleotide + diphosphate. Polymerase that creates the 3'-poly(A) tail of mRNA's. This is Poly(A) polymerase catalytic subunit (OPG063) from Homo sapiens (Human).